We begin with the raw amino-acid sequence, 402 residues long: Ketol-acid reductoisomerase, mitochondrial (402 aa).

A mitochondrion-targeting transit peptide spans 1–26; sequence MAARNCTKALRPLARQLATPAVQRRT. Residues 63 to 252 form the KARI N-terminal Rossmann domain; it reads KEEVHERADW…AVGSGYLYET (190 aa). NADP(+) is bound by residues 90 to 99, 114 to 119, and 152 to 156; these read GYGSQGHGQG, RKNGKS, and SDAAQ. His177 is an active-site residue. Positions 253–400 constitute a KARI C-terminal knotted domain; it reads TFEKEVYSDL…KAVRSLRPEN (148 aa). Mg(2+) is bound by residues Asp261, Glu265, Glu297, and Glu301. Ser323 is a substrate binding site.

This sequence belongs to the ketol-acid reductoisomerase family. Requires Mg(2+) as cofactor.

The protein resides in the mitochondrion. It catalyses the reaction (2R)-2,3-dihydroxy-3-methylbutanoate + NADP(+) = (2S)-2-acetolactate + NADPH + H(+). It carries out the reaction (2R,3R)-2,3-dihydroxy-3-methylpentanoate + NADP(+) = (S)-2-ethyl-2-hydroxy-3-oxobutanoate + NADPH + H(+). Its pathway is amino-acid biosynthesis; L-isoleucine biosynthesis; L-isoleucine from 2-oxobutanoate: step 2/4. The protein operates within amino-acid biosynthesis; L-valine biosynthesis; L-valine from pyruvate: step 2/4. This is Ketol-acid reductoisomerase, mitochondrial (ilv-2) from Neurospora crassa (strain ATCC 24698 / 74-OR23-1A / CBS 708.71 / DSM 1257 / FGSC 987).